A 373-amino-acid polypeptide reads, in one-letter code: 3-dehydroquinate synthase (373 aa).

Residues E67 to K72, G101 to D105, T125 to T126, K138, and K147 contribute to the NAD(+) site. Positions 180, 240, and 256 each coordinate Zn(2+).

Belongs to the sugar phosphate cyclases superfamily. Dehydroquinate synthase family. NAD(+) is required as a cofactor. Co(2+) serves as cofactor. Requires Zn(2+) as cofactor.

It is found in the cytoplasm. It catalyses the reaction 7-phospho-2-dehydro-3-deoxy-D-arabino-heptonate = 3-dehydroquinate + phosphate. Its pathway is metabolic intermediate biosynthesis; chorismate biosynthesis; chorismate from D-erythrose 4-phosphate and phosphoenolpyruvate: step 2/7. Its function is as follows. Catalyzes the conversion of 3-deoxy-D-arabino-heptulosonate 7-phosphate (DAHP) to dehydroquinate (DHQ). This is 3-dehydroquinate synthase (aroB) from Chlamydia muridarum (strain MoPn / Nigg).